Here is a 761-residue protein sequence, read N- to C-terminus: MEGPEITFAEAMLDNGRFGARTVRFETGRIAQQAQGAVAAYLDEETMLLSATSASKHPKDNFDFFPLTVDVEERSYAAGKIPGSFFRREGRPSTEAILVCRLIDRPLRPSFVDGLRNEVQIVVTVLSIAPDEFYDALAINAASASTQISGLPFSGPIAGVRLALIPGNGAHEDQWVAFPKASQLEEAVFDLIVVGRVLTNEDGTEGDVAIMMVEAEATEGSWNLIQGGAVKPNEEVVAQGLEAAKPFIRQLVGAQAALAKQSAKAIADYPVFLPYSQETYDSVAALAYDELVNVYQIADKVERQNADDALKERVKAALAEKAQAGALDAEALTQFSAAYKSVSKVVMRGRVLREGVRIDGRGLTDIRPLDAEVQIIPRVHGSAVFQRGETQILGVTTLNMLKMEQQIDSLSPVTKKRYLHHYNFPPYSTGETGRVGSPKRREIGHGFLAERALVPVLPSREEFPYAIRQVSEALSSNGSTSMGSVCASTLSLLNAGVPLRAPVAGIAMGLISDVIDGETRYAALTDILGAEDALGDMDFKVAGTSEFVTAIQLDTKLDGIPSSVLASALKQAKDARTTILSVLDAAIDAPDEMAPTAPRVISVQIPVDKIGELIGPKGKTINAIQDETGADISIDEDGTVYIGAVDGPSAEAARAQVNVIANPTNPEVGEQFLGTVVKNAAFGAFVSLLPGKDGLLHISEVRKLAGGKRVESVDDVLSIGQKILVEITKIDDRGKLSLAPVLADEAETHGHDAASEGPTEG.

The Mg(2+) site is built by D532 and D538. Residues 598 to 657 (PRVISVQIPVDKIGELIGPKGKTINAIQDETGADISIDEDGTVYIGAVDGPSAEAARAQV) enclose the KH domain. The 73-residue stretch at 669-741 (GEQFLGTVVK…DRGKLSLAPV (73 aa)) folds into the S1 motif domain.

It belongs to the polyribonucleotide nucleotidyltransferase family. It depends on Mg(2+) as a cofactor.

It is found in the cytoplasm. It carries out the reaction RNA(n+1) + phosphate = RNA(n) + a ribonucleoside 5'-diphosphate. Functionally, involved in mRNA degradation. Catalyzes the phosphorolysis of single-stranded polyribonucleotides processively in the 3'- to 5'-direction. This chain is Polyribonucleotide nucleotidyltransferase, found in Leifsonia xyli subsp. xyli (strain CTCB07).